The following is a 432-amino-acid chain: Alpha-enolase (432 aa).

Ser40 contacts Mg(2+). The substrate site is built by His158 and Glu167. Glu210 acts as the Proton donor in catalysis. 3 residues coordinate Mg(2+): Asp245, Glu293, and Asp318. Positions 293 and 318 each coordinate substrate. Lys343 serves as the catalytic Proton acceptor. Substrate contacts are provided by residues 370 to 373 (SHRS) and Lys394.

It belongs to the enolase family. As to quaternary structure, dimer. Mg(2+) serves as cofactor.

It is found in the cytoplasm. It carries out the reaction (2R)-2-phosphoglycerate = phosphoenolpyruvate + H2O. Its pathway is carbohydrate degradation; glycolysis; pyruvate from D-glyceraldehyde 3-phosphate: step 4/5. In terms of biological role, multifunctional enzyme that, as well as its role in glycolysis, plays a part in various processes such as growth control, hypoxia tolerance and allergic responses. The polypeptide is Alpha-enolase (Thunnus albacares (Yellowfin tuna)).